We begin with the raw amino-acid sequence, 541 residues long: Probable inorganic phosphate transporter 1-12 (541 aa).

The Cytoplasmic segment spans residues 1 to 26 (MGRQDQQLQVLNALDAAKTQWYHFTA). A helical transmembrane segment spans residues 27 to 47 (IIVAGMGFFTDAYDLFCISLV). The Extracellular segment spans residues 48 to 70 (TKLLGRIYYTDPASPTPGSLPPN). A helical transmembrane segment spans residues 71 to 91 (IAAAVNGVALCGTLSGQLFFG). At 92-100 (WLGDKLGRK) the chain is on the cytoplasmic side. The helical transmembrane segment at 101–121 (SVYGMTLLLMVICSIASGLSF) threads the bilayer. At 122–124 (SHT) the chain is on the extracellular side. Residues 125–145 (PTSVMATLCFFRFWLGFGIGG) traverse the membrane as a helical segment. Residues 146-163 (DYPLSATIMSEYANKKTR) are Cytoplasmic-facing. A helical transmembrane segment spans residues 164–184 (GAFIAAVFAMQGFGILAGGVV). The Extracellular portion of the chain corresponds to 185 to 213 (TLAMSAGFQAAFPAPAYEVNAAASTVPQA). The helical transmembrane segment at 214–234 (DYVWRIILMLGALPAILTYYW) threads the bilayer. Residues 235–297 (RMKMPETARY…ARFAKRHGAH (63 aa)) lie on the Cytoplasmic side of the membrane. The chain crosses the membrane as a helical span at residues 298–318 (LLGTAATWFLVDVAYYSQNLF). Over 319–349 (QKDIFTSIHWIPKARTMSELEEVFRISRAQT) the chain is Extracellular. A helical membrane pass occupies residues 350 to 370 (LIALCGTVPGYWFTVFLIDII). The Cytoplasmic segment spans residues 371-374 (GRFK). The helical transmembrane segment at 375–395 (IQLLGFAGMTAFMLGLAIPYH) threads the bilayer. Residues 396-403 (HWTMPGNQ) lie on the Extracellular side of the membrane. The helical transmembrane segment at 404-424 (VIFVFLYGFTFFFANFGPNAT) threads the bilayer. At 425–443 (TFIVPAEIFPARLRSTCHG) the chain is on the cytoplasmic side. Residues 444–464 (ISAASGKAGAIIGAFGFLYAA) traverse the membrane as a helical segment. Topologically, residues 465–484 (QPQDKAHVDAGYKPGIGVRN) are extracellular. Residues 485 to 505 (ALFVLAGCNLVGFLMTWMLVP) traverse the membrane as a helical segment. The Cytoplasmic portion of the chain corresponds to 506 to 541 (ESKGKSLEEMSGEADDEEASANGGATAVNSSGVEMV). Residues 512–541 (LEEMSGEADDEEASANGGATAVNSSGVEMV) are disordered. The segment covering 515–524 (MSGEADDEEA) has biased composition (acidic residues). A compositionally biased stretch (polar residues) spans 532–541 (AVNSSGVEMV).

This sequence belongs to the major facilitator superfamily. Phosphate:H(+) symporter (TC 2.A.1.9) family.

The protein localises to the membrane. Its function is as follows. High-affinity transporter for external inorganic phosphate. This is Probable inorganic phosphate transporter 1-12 (PHT1-12) from Oryza sativa subsp. japonica (Rice).